The chain runs to 249 residues: Type III pantothenate kinase (249 aa).

6–13 (DIGNSRTK) provides a ligand contact to ATP. Residues tyrosine 89 and 96–99 (GIDR) contribute to the substrate site. Aspartate 98 serves as the catalytic Proton acceptor. Aspartate 119 serves as a coordination point for K(+). Threonine 122 provides a ligand contact to ATP. Threonine 174 is a binding site for substrate.

This sequence belongs to the type III pantothenate kinase family. In terms of assembly, homodimer. Requires NH4(+) as cofactor. K(+) serves as cofactor.

It is found in the cytoplasm. It catalyses the reaction (R)-pantothenate + ATP = (R)-4'-phosphopantothenate + ADP + H(+). It participates in cofactor biosynthesis; coenzyme A biosynthesis; CoA from (R)-pantothenate: step 1/5. Its function is as follows. Catalyzes the phosphorylation of pantothenate (Pan), the first step in CoA biosynthesis. The chain is Type III pantothenate kinase from Colwellia psychrerythraea (strain 34H / ATCC BAA-681) (Vibrio psychroerythus).